Here is a 335-residue protein sequence, read N- to C-terminus: Holliday junction branch migration complex subunit RuvB (335 aa).

Positions Met-1–Tyr-181 are large ATPase domain (RuvB-L). Residues Leu-20, Arg-21, Gly-62, Lys-65, Thr-66, Thr-67, Glu-128–Phe-130, Arg-171, Tyr-181, and Arg-218 contribute to the ATP site. Thr-66 is a Mg(2+) binding site. The small ATPAse domain (RuvB-S) stretch occupies residues Asn-182 to Gly-252. The head domain (RuvB-H) stretch occupies residues Asp-255–Phe-335. DNA is bound by residues Arg-309 and Arg-314.

This sequence belongs to the RuvB family. As to quaternary structure, homohexamer. Forms an RuvA(8)-RuvB(12)-Holliday junction (HJ) complex. HJ DNA is sandwiched between 2 RuvA tetramers; dsDNA enters through RuvA and exits via RuvB. An RuvB hexamer assembles on each DNA strand where it exits the tetramer. Each RuvB hexamer is contacted by two RuvA subunits (via domain III) on 2 adjacent RuvB subunits; this complex drives branch migration. In the full resolvosome a probable DNA-RuvA(4)-RuvB(12)-RuvC(2) complex forms which resolves the HJ.

The protein resides in the cytoplasm. It catalyses the reaction ATP + H2O = ADP + phosphate + H(+). In terms of biological role, the RuvA-RuvB-RuvC complex processes Holliday junction (HJ) DNA during genetic recombination and DNA repair, while the RuvA-RuvB complex plays an important role in the rescue of blocked DNA replication forks via replication fork reversal (RFR). RuvA specifically binds to HJ cruciform DNA, conferring on it an open structure. The RuvB hexamer acts as an ATP-dependent pump, pulling dsDNA into and through the RuvAB complex. RuvB forms 2 homohexamers on either side of HJ DNA bound by 1 or 2 RuvA tetramers; 4 subunits per hexamer contact DNA at a time. Coordinated motions by a converter formed by DNA-disengaged RuvB subunits stimulates ATP hydrolysis and nucleotide exchange. Immobilization of the converter enables RuvB to convert the ATP-contained energy into a lever motion, pulling 2 nucleotides of DNA out of the RuvA tetramer per ATP hydrolyzed, thus driving DNA branch migration. The RuvB motors rotate together with the DNA substrate, which together with the progressing nucleotide cycle form the mechanistic basis for DNA recombination by continuous HJ branch migration. Branch migration allows RuvC to scan DNA until it finds its consensus sequence, where it cleaves and resolves cruciform DNA. This chain is Holliday junction branch migration complex subunit RuvB, found in Wolinella succinogenes (strain ATCC 29543 / DSM 1740 / CCUG 13145 / JCM 31913 / LMG 7466 / NCTC 11488 / FDC 602W) (Vibrio succinogenes).